Reading from the N-terminus, the 146-residue chain is Ferredoxin-thioredoxin reductase catalytic chain, chloroplastic (146 aa).

Residues 1–26 (MMSMASTTASPFCPSPMPRGRKCTVR) constitute a chloroplast transit peptide. Residue Cys-85 coordinates [4Fe-4S] cluster. The active-site Nucleophile is the Cys-87. A disulfide bond links Cys-87 and Cys-117. 3 residues coordinate [4Fe-4S] cluster: Cys-104, Cys-106, and Cys-115.

Belongs to the ferredoxin thioredoxin reductase beta subunit family. Heterodimer of subunit A (variable subunit) and subunit B (catalytic subunit). Heterodimeric FTR forms a complex with ferredoxin and thioredoxin. The cofactor is [4Fe-4S] cluster.

The protein resides in the plastid. The protein localises to the chloroplast. It catalyses the reaction [thioredoxin]-disulfide + 2 reduced [2Fe-2S]-[ferredoxin] + 2 H(+) = [thioredoxin]-dithiol + 2 oxidized [2Fe-2S]-[ferredoxin]. In terms of biological role, catalytic subunit of the ferredoxin-thioredoxin reductase (FTR), which catalyzes the two-electron reduction of thioredoxins by the electrons provided by reduced ferredoxin. In Oryza sativa subsp. japonica (Rice), this protein is Ferredoxin-thioredoxin reductase catalytic chain, chloroplastic.